A 109-amino-acid chain; its full sequence is Nucleoid-associated protein ECA1177 (109 aa).

It belongs to the YbaB/EbfC family. In terms of assembly, homodimer.

It localises to the cytoplasm. It is found in the nucleoid. Binds to DNA and alters its conformation. May be involved in regulation of gene expression, nucleoid organization and DNA protection. This chain is Nucleoid-associated protein ECA1177, found in Pectobacterium atrosepticum (strain SCRI 1043 / ATCC BAA-672) (Erwinia carotovora subsp. atroseptica).